The primary structure comprises 2752 residues: Protein PFF0380w (2752 aa).

The segment covering 20–30 (EREKEEEEKKR) has biased composition (basic and acidic residues). Disordered regions lie at residues 20–44 (EREK…NNYN), 139–160 (HIHK…NNDY), 634–678 (NDIV…INMK), 1048–1130 (DKKS…SGEN), and 1153–1172 (ENLQ…NNNG). Residues 32-44 (YNISNNNNNNNYN) show a composition bias toward low complexity. Positions 142–157 (KNNDINNIHEKNDKSN) are enriched in basic and acidic residues. The span at 640–674 (NNNNNNNNNNNNNNNNNNNNNNNNNNNNNNNNNNN) shows a compositional bias: low complexity. Residues 1048-1060 (DKKSEDMKEDTPT) are compositionally biased toward basic and acidic residues. The segment covering 1061 to 1075 (RGENLQRGQNLQRGD) has biased composition (polar residues). The span at 1076–1090 (NLQRGDNLQRGDNLQ) shows a compositional bias: basic and acidic residues. Polar residues predominate over residues 1091–1130 (RGDNLQNGDNLQNGDNLQRGDNLQNGENLQSGENLQSGEN). Over residues 1162–1172 (NNILYPYNNNG) the composition is skewed to low complexity. One can recognise an HTH OST-type domain in the interval 1277–1354 (TLEEVLEIIS…LHRTHIQHKK (78 aa)). Disordered stretches follow at residues 1457-1499 (DIKQ…NNIS), 1958-1999 (AKNS…YYML), 2063-2099 (KRKN…NNDK), and 2501-2537 (DENN…FLHN). Low complexity-rich tracts occupy residues 1469-1499 (NNIN…NNIS) and 1962-1975 (NQEN…NYNN). A compositionally biased stretch (acidic residues) spans 1976–1994 (NDDDDDNNNNNNDDDDDDN). 2 stretches are compositionally biased toward low complexity: residues 2068-2095 (NIHN…NNDN) and 2501-2526 (DENN…VLHN).

The polypeptide is Protein PFF0380w (Plasmodium falciparum (isolate 3D7)).